The primary structure comprises 88 residues: HssA/B-like protein 6 (88 aa).

The segment at 1–22 (MSILSALTSISNPMKSSNSNVA) is disordered.

It belongs to the hssA/B family.

This Dictyostelium discoideum (Social amoeba) protein is HssA/B-like protein 6 (hssl6).